Consider the following 663-residue polypeptide: UvrABC system protein B (663 aa).

Basic and acidic residues predominate over residues 1-10 (MIDKRDDKPF). The disordered stretch occupies residues 1–23 (MIDKRDDKPFKLKSKYKPSGDQP). One can recognise a Helicase ATP-binding domain in the interval 31 to 271 (DNIEGGEKAQ…EQSIAKIQAE (241 aa)). Residue 44–51 (GATGTGKT) coordinates ATP. Residues 97-120 (YYDYYQPEAYVPSSDTYIEKDSSV) carry the Beta-hairpin motif. The Helicase C-terminal domain occupies 435 to 601 (QIDDLLGEIN…TIKKDIRGLI (167 aa)). The UVR domain occupies 627–662 (KEAINALQKQMQEAAELLDFELAAQMRDLILELKLM).

The protein belongs to the UvrB family. In terms of assembly, forms a heterotetramer with UvrA during the search for lesions. Interacts with UvrC in an incision complex.

The protein localises to the cytoplasm. Functionally, the UvrABC repair system catalyzes the recognition and processing of DNA lesions. A damage recognition complex composed of 2 UvrA and 2 UvrB subunits scans DNA for abnormalities. Upon binding of the UvrA(2)B(2) complex to a putative damaged site, the DNA wraps around one UvrB monomer. DNA wrap is dependent on ATP binding by UvrB and probably causes local melting of the DNA helix, facilitating insertion of UvrB beta-hairpin between the DNA strands. Then UvrB probes one DNA strand for the presence of a lesion. If a lesion is found the UvrA subunits dissociate and the UvrB-DNA preincision complex is formed. This complex is subsequently bound by UvrC and the second UvrB is released. If no lesion is found, the DNA wraps around the other UvrB subunit that will check the other stand for damage. This is UvrABC system protein B from Streptococcus pyogenes serotype M5 (strain Manfredo).